The following is a 136-amino-acid chain: Ribosome-binding factor A (136 aa).

It belongs to the RbfA family. Monomer. Binds 30S ribosomal subunits, but not 50S ribosomal subunits or 70S ribosomes.

The protein localises to the cytoplasm. Its function is as follows. One of several proteins that assist in the late maturation steps of the functional core of the 30S ribosomal subunit. Associates with free 30S ribosomal subunits (but not with 30S subunits that are part of 70S ribosomes or polysomes). Required for efficient processing of 16S rRNA. May interact with the 5'-terminal helix region of 16S rRNA. In Serratia proteamaculans (strain 568), this protein is Ribosome-binding factor A.